We begin with the raw amino-acid sequence, 176 residues long: tRNA (adenine(37)-N6)-methyltransferase (176 aa).

The 94-residue stretch at 1–94 (SFSHIWVQFV…YLPFVEAQPD (94 aa)) folds into the TsaA-like domain. S-adenosyl-L-methionine is bound by residues His12, 12–13 (HG), Arg40, Leu50, and 74–77 (LDGT).

The protein belongs to the tRNA methyltransferase O family.

It catalyses the reaction N(6)-L-threonylcarbamoyladenosine(37) in tRNA + S-adenosyl-L-methionine = N(6)-methyl,N(6)-L-threonylcarbamoyladenosine(37) in tRNA + S-adenosyl-L-homocysteine + H(+). Its function is as follows. S-adenosyl-L-methionine-dependent methyltransferase responsible for the addition of the methyl group in the formation of N6-methyl-N6-threonylcarbamoyladenosine at position 37 (m(6)t(6)A37) of the tRNA anticodon loop of tRNA(Thr)(GGU). The methyl group of m(6)t(6)A37 appears to slightly improve the efficiency of the tRNA decoding ability. Binds to tRNA. The protein is tRNA (adenine(37)-N6)-methyltransferase of Eikenella corrodens.